A 1202-amino-acid polypeptide reads, in one-letter code: MAGHLVKYGKHRTRRSYARIKEVLDLPNLIEIQSDSYQWFLDEGLREMFNDIMPIEDFAGKLSLEFVDYQLLEPKYTVDEAREHEANYSAPLHVTLRLTNHETGEIKSQDVFFGDFPLMTEQGTFIINGAERVIVSQLVRSPGVYYNLDTDKNNRKIWGTTVIPNRGAWLEYETDAKEISYVRIDRTRKIPMTELVRALGFGSDEEIIDIFGGSDSLDFTLDKDVHKNPEDSRVAESLKDIYERLRPGEPKTADSSRSLLTARFFDPKRYDMAPVGRYKVNKKLSLKTRLLGQTLAETLADPDTGEVIAQKGEMVNKDVMKKLAVFLDRPDFKMVTYQPSEEAVVTEPMTIQVIKVQDPNDPERTLNMIGNGNIDAKLKHITPADIIASMNYFFLLQDGIGSTDDIDHLGNRRIRSVGELLQNQFRIGLSRMERVVRERMSIQDAETVTPQQLINIRPVVAATKEFFGSSQLSQFMDQTNPLGELSHKRRLSALGPGGLTRDRAGYEVRDVHYTHYGRMCPIETPEGPNIGLINNLASYGKINRYGFIETPYRRVSWEDHKVTDRIDYLTADEEDQFVIAQANSPLNDDGSFADDVVMARHESDNIETSIENVDYMDVSPKQVVAVATACIPFLENDDSNRALMGANMQRQAVPLVDPHSPLIGTGIEYKAAHDSGVALLCQHAGVVEYVDAREVRVRRDDGALDTYKLMKFRRSNGGKNYNQRPIVRVNDKVDADEVLADGPSMEQGELALGQNPLIAFMTWQGYNFEDAIAINERLVRDDVYTSIHIEEYESEARDTKLGPEEMTREIPNIGEDALRNLDQDGIVRVGAEVEDGDILVGKVTPKGVTELSAEERLLHAIFGEKAREVRDTSLRVPHGGGGIVQDVKIFTRENGDELSPGVNMMVRVYIAQKRKLQVGDKMAGRHGNKGTVSVVIPQEDMPYMPDGTPIDIMLSPMGVPSRMNIGQVLELHLGMAARNLGIHMTTPVFDGAQDKDIWEAVAEAGMDSDAKSVLYDGRTGEPFEQRVAVGVMHYMKLAHMVDDKIHARSIGPYSLVTQQPLGGKAQFGGQRFGEMEVWALEAYGAAYTLQEILTYKSDDVVGRVKTYEAIVKGEPIPRPGVPESFRVLVKELQALGLDMKVLGGDDQEVELRDMDEEDDDVVNVDALSKYAEKQNEKTNASAEEAKAPSTESAPVETKNNQN.

Acidic residues predominate over residues 1151-1162 (LRDMDEEDDDVV). The interval 1151-1202 (LRDMDEEDDDVVNVDALSKYAEKQNEKTNASAEEAKAPSTESAPVETKNNQN) is disordered. Residues 1189-1202 (STESAPVETKNNQN) are compositionally biased toward polar residues.

It belongs to the RNA polymerase beta chain family. In terms of assembly, the RNAP catalytic core consists of 2 alpha, 1 beta, 1 beta' and 1 omega subunit. When a sigma factor is associated with the core the holoenzyme is formed, which can initiate transcription.

The enzyme catalyses RNA(n) + a ribonucleoside 5'-triphosphate = RNA(n+1) + diphosphate. In terms of biological role, DNA-dependent RNA polymerase catalyzes the transcription of DNA into RNA using the four ribonucleoside triphosphates as substrates. In Pediococcus pentosaceus (strain ATCC 25745 / CCUG 21536 / LMG 10740 / 183-1w), this protein is DNA-directed RNA polymerase subunit beta.